Consider the following 180-residue polypeptide: Chromosome-anchoring protein RacA (180 aa).

The segment at residues 5–25 (TPFIAKKLGVSPKAVVRIAQQ) is a DNA-binding region (H-T-H motif). Positions 89 to 151 (SHDFEQLTAQ…LEATLKKEEP (63 aa)) form a coiled coil.

Belongs to the RacA family.

It is found in the cytoplasm. Required for the formation of axial filaments and for anchoring the origin regions at the cell poles in sporulating cells, thus ensuring proper chromosome segregation in the prespore. Binds in a dispersed manner throughout the chromosome but preferentially to sites clustered in the origin portion of the chromosome, causing condensation of the chromosome and its remodeling into an elongated, anchored structure. The sequence is that of Chromosome-anchoring protein RacA from Bacillus cereus (strain ATCC 10987 / NRS 248).